The chain runs to 254 residues: tRNA pseudouridine synthase A (254 aa).

Residue Asp52 is the Nucleophile of the active site. Tyr111 is a binding site for substrate.

Belongs to the tRNA pseudouridine synthase TruA family. As to quaternary structure, homodimer.

The enzyme catalyses uridine(38/39/40) in tRNA = pseudouridine(38/39/40) in tRNA. Its function is as follows. Formation of pseudouridine at positions 38, 39 and 40 in the anticodon stem and loop of transfer RNAs. This is tRNA pseudouridine synthase A from Rhizorhabdus wittichii (strain DSM 6014 / CCUG 31198 / JCM 15750 / NBRC 105917 / EY 4224 / RW1) (Sphingomonas wittichii).